Reading from the N-terminus, the 199-residue chain is MLDNLKKYKIVLGSQSPRRKELLSGLDIRFEQKAMPDIAEDYPAGLDPEKVPLYLARMKAEAYRSKGMMQDSTLLITADTVVIVDGAILGKPQDREEAARMLRTLSGRTHQVVTGVCISHRWETRAFSCSSLVTFAHLSDEEIDYYLERYRPYDKAGSYGIQEWIGYIAIQRVEGSFYNVMGLPVHLLYNELKDFGESN.

Catalysis depends on aspartate 79, which acts as the Proton acceptor.

It belongs to the Maf family. YhdE subfamily. The cofactor is a divalent metal cation.

The protein resides in the cytoplasm. It carries out the reaction dTTP + H2O = dTMP + diphosphate + H(+). It catalyses the reaction UTP + H2O = UMP + diphosphate + H(+). Its function is as follows. Nucleoside triphosphate pyrophosphatase that hydrolyzes dTTP and UTP. May have a dual role in cell division arrest and in preventing the incorporation of modified nucleotides into cellular nucleic acids. The chain is dTTP/UTP pyrophosphatase from Porphyromonas gingivalis (strain ATCC 33277 / DSM 20709 / CIP 103683 / JCM 12257 / NCTC 11834 / 2561).